Reading from the N-terminus, the 361-residue chain is Phosphoserine aminotransferase (361 aa).

L-glutamate is bound by residues S9 and R42. Pyridoxal 5'-phosphate contacts are provided by residues 76–77 (AR), W103, T153, D173, and Q196. K197 is modified (N6-(pyridoxal phosphate)lysine). Pyridoxal 5'-phosphate is bound at residue 238–239 (NT).

The protein belongs to the class-V pyridoxal-phosphate-dependent aminotransferase family. SerC subfamily. As to quaternary structure, homodimer. Pyridoxal 5'-phosphate serves as cofactor.

It is found in the cytoplasm. It catalyses the reaction O-phospho-L-serine + 2-oxoglutarate = 3-phosphooxypyruvate + L-glutamate. The catalysed reaction is 4-(phosphooxy)-L-threonine + 2-oxoglutarate = (R)-3-hydroxy-2-oxo-4-phosphooxybutanoate + L-glutamate. The protein operates within amino-acid biosynthesis; L-serine biosynthesis; L-serine from 3-phospho-D-glycerate: step 2/3. It functions in the pathway cofactor biosynthesis; pyridoxine 5'-phosphate biosynthesis; pyridoxine 5'-phosphate from D-erythrose 4-phosphate: step 3/5. Functionally, catalyzes the reversible conversion of 3-phosphohydroxypyruvate to phosphoserine and of 3-hydroxy-2-oxo-4-phosphonooxybutanoate to phosphohydroxythreonine. This is Phosphoserine aminotransferase from Wigglesworthia glossinidia brevipalpis.